Here is a 347-residue protein sequence, read N- to C-terminus: NADH-ubiquinone oxidoreductase chain 2 (347 aa).

A run of 11 helical transmembrane segments spans residues 3-23 (PPIL…VLTS), 25-45 (HWLT…PILM), 59-79 (YLLT…IDLL), 96-116 (AMMT…FWVP), 122-142 (IHMS…LSIL), 149-169 (INPN…GWGG), 178-198 (ILAY…LYNP), 200-220 (MMIL…MLFM), 237-257 (APLI…LPPL), 274-294 (EMII…YFYM), and 325-345 (LLSP…LLSI).

It belongs to the complex I subunit 2 family. In terms of assembly, core subunit of respiratory chain NADH dehydrogenase (Complex I) which is composed of 45 different subunits. Interacts with TMEM242.

It localises to the mitochondrion inner membrane. The catalysed reaction is a ubiquinone + NADH + 5 H(+)(in) = a ubiquinol + NAD(+) + 4 H(+)(out). In terms of biological role, core subunit of the mitochondrial membrane respiratory chain NADH dehydrogenase (Complex I) which catalyzes electron transfer from NADH through the respiratory chain, using ubiquinone as an electron acceptor. Essential for the catalytic activity and assembly of complex I. The protein is NADH-ubiquinone oxidoreductase chain 2 of Cynictis penicillata (Yellow mongoose).